A 182-amino-acid polypeptide reads, in one-letter code: Small ribosomal subunit protein uS9 (182 aa).

The protein belongs to the universal ribosomal protein uS9 family.

This chain is Small ribosomal subunit protein uS9, found in Corynebacterium glutamicum (strain R).